Reading from the N-terminus, the 438-residue chain is Ribosome biogenesis protein NOP53 (438 aa).

Disordered regions lie at residues 1–23 (MVAGKRTGAAKGSRHNKKYWRKG) and 247–346 (HPKY…RKKE). Positions 12-21 (GSRHNKKYWR) are enriched in basic residues. Composition is skewed to basic and acidic residues over residues 265-288 (KSMKTGGEAEPKSQRVECDRMTKE), 297-318 (QKLDKEEKRRLEEKAKEQDSHN), and 325-346 (LHKELDEEEKQRHEESEVRKKE).

This sequence belongs to the NOP53 family.

The protein localises to the nucleus. Its subcellular location is the nucleolus. It localises to the nucleoplasm. In terms of biological role, may play a role in ribosome biogenesis, being required for integration of the 5S RNP into the ribosomal large subunit. In Caenorhabditis elegans, this protein is Ribosome biogenesis protein NOP53.